A 353-amino-acid chain; its full sequence is Nicotinate-nucleotide--dimethylbenzimidazole phosphoribosyltransferase (353 aa).

The active-site Proton acceptor is the Glu318.

It belongs to the CobT family.

It catalyses the reaction 5,6-dimethylbenzimidazole + nicotinate beta-D-ribonucleotide = alpha-ribazole 5'-phosphate + nicotinate + H(+). Its pathway is nucleoside biosynthesis; alpha-ribazole biosynthesis; alpha-ribazole from 5,6-dimethylbenzimidazole: step 1/2. Its function is as follows. Catalyzes the synthesis of alpha-ribazole-5'-phosphate from nicotinate mononucleotide (NAMN) and 5,6-dimethylbenzimidazole (DMB). The protein is Nicotinate-nucleotide--dimethylbenzimidazole phosphoribosyltransferase of Desulforudis audaxviator (strain MP104C).